The chain runs to 245 residues: tRNA pseudouridine synthase A (245 aa).

The active-site Nucleophile is D52. Y112 is a binding site for substrate.

It belongs to the tRNA pseudouridine synthase TruA family. In terms of assembly, homodimer.

The enzyme catalyses uridine(38/39/40) in tRNA = pseudouridine(38/39/40) in tRNA. Its function is as follows. Formation of pseudouridine at positions 38, 39 and 40 in the anticodon stem and loop of transfer RNAs. In Dictyoglomus thermophilum (strain ATCC 35947 / DSM 3960 / H-6-12), this protein is tRNA pseudouridine synthase A.